Consider the following 177-residue polypeptide: Outer membrane lipoprotein Blc (177 aa).

A signal peptide spans 1–18 (MRILPVVAAVTAAFLVVA). Cys19 carries N-palmitoyl cysteine lipidation. The S-diacylglycerol cysteine moiety is linked to residue Cys19.

It belongs to the calycin superfamily. Lipocalin family. Homodimer.

It localises to the cell outer membrane. Functionally, involved in the storage or transport of lipids necessary for membrane maintenance under stressful conditions. Displays a binding preference for lysophospholipids. The chain is Outer membrane lipoprotein Blc from Citrobacter freundii.